Consider the following 383-residue polypeptide: Acetylornithine deacetylase (383 aa).

Position 80 (His80) interacts with Zn(2+). Residue Asp82 is part of the active site. Asp112 serves as a coordination point for Zn(2+). The active site involves Glu144. Residues Glu145, Glu169, and His355 each contribute to the Zn(2+) site.

The protein belongs to the peptidase M20A family. ArgE subfamily. As to quaternary structure, homodimer. It depends on Zn(2+) as a cofactor. Co(2+) is required as a cofactor. The cofactor is glutathione.

Its subcellular location is the cytoplasm. The catalysed reaction is N(2)-acetyl-L-ornithine + H2O = L-ornithine + acetate. It participates in amino-acid biosynthesis; L-arginine biosynthesis; L-ornithine from N(2)-acetyl-L-ornithine (linear): step 1/1. Functionally, catalyzes the hydrolysis of the amide bond of N(2)-acetylated L-amino acids. Cleaves the acetyl group from N-acetyl-L-ornithine to form L-ornithine, an intermediate in L-arginine biosynthesis pathway, and a branchpoint in the synthesis of polyamines. The protein is Acetylornithine deacetylase of Escherichia coli O127:H6 (strain E2348/69 / EPEC).